A 769-amino-acid polypeptide reads, in one-letter code: Serine/threonine-protein kinase PLK4 (769 aa).

In terms of domain architecture, Protein kinase spans 14–267 (YEVQHLLGKG…LEAVLCHPFM (254 aa)). Residues 20-28 (LGKGGFATV) and lysine 43 each bind ATP. The Proton acceptor role is filled by aspartate 138. The 118-residue stretch at 381–498 (EDRISVPPLN…ARFVGLVKSK (118 aa)) folds into the Cryptic POLO box 1 (CPB1) domain. Residues 499-602 (TPKVTYFSTL…GRRPITDVQP (104 aa)) enclose the Cryptic POLO box 2 (CPB2) domain. The 80-residue stretch at 660–739 (PIKRINVPDI…IPNIQLKLKT (80 aa)) folds into the POLO box domain.

This sequence belongs to the protein kinase superfamily. Ser/Thr protein kinase family. CDC5/Polo subfamily. Homodimer. Ubiquitinated by the SCF(Slimb) ubiquitin ligase complex; leading to its degradation by the proteasome during interphase and regulating centriole number and ensuring the block to centriole reduplication.

It localises to the cytoplasm. Its subcellular location is the cytoskeleton. The protein resides in the microtubule organizing center. The protein localises to the centrosome. It is found in the centriole. The enzyme catalyses L-seryl-[protein] + ATP = O-phospho-L-seryl-[protein] + ADP + H(+). It catalyses the reaction L-threonyl-[protein] + ATP = O-phospho-L-threonyl-[protein] + ADP + H(+). Functionally, serine/threonine-protein kinase that plays a central role in centriole duplication. Able to trigger procentriole formation on the surface of the mother centriole cylinder, using mother centriole as a platform, leading to the recruitment of centriole biogenesis proteins such as sas-6. When overexpressed, it is able to induce centrosome amplification through the simultaneous generation of multiple procentrioles adjoining each parental centriole during S phase. Centrosome amplification following overexpression can initiate tumorigenesis, highlighting the importance of centrosome regulation in cancers. This Drosophila sechellia (Fruit fly) protein is Serine/threonine-protein kinase PLK4 (SAK).